The sequence spans 171 residues: Large ribosomal subunit protein uL22 (171 aa).

It belongs to the universal ribosomal protein uL22 family.

The protein is Large ribosomal subunit protein uL22 (RPL17) of Zea mays (Maize).